Reading from the N-terminus, the 111-residue chain is Small ribosomal subunit protein bS16 (111 aa).

A disordered region spans residues 92-111 (MDVKAKNRKARSSKQEAKEA).

It belongs to the bacterial ribosomal protein bS16 family.

In Rickettsia akari (strain Hartford), this protein is Small ribosomal subunit protein bS16.